A 499-amino-acid chain; its full sequence is Aspartyl/glutamyl-tRNA(Asn/Gln) amidotransferase subunit B (499 aa).

Belongs to the GatB/GatE family. GatB subfamily. Heterotrimer of A, B and C subunits.

It carries out the reaction L-glutamyl-tRNA(Gln) + L-glutamine + ATP + H2O = L-glutaminyl-tRNA(Gln) + L-glutamate + ADP + phosphate + H(+). It catalyses the reaction L-aspartyl-tRNA(Asn) + L-glutamine + ATP + H2O = L-asparaginyl-tRNA(Asn) + L-glutamate + ADP + phosphate + 2 H(+). Allows the formation of correctly charged Asn-tRNA(Asn) or Gln-tRNA(Gln) through the transamidation of misacylated Asp-tRNA(Asn) or Glu-tRNA(Gln) in organisms which lack either or both of asparaginyl-tRNA or glutaminyl-tRNA synthetases. The reaction takes place in the presence of glutamine and ATP through an activated phospho-Asp-tRNA(Asn) or phospho-Glu-tRNA(Gln). This is Aspartyl/glutamyl-tRNA(Asn/Gln) amidotransferase subunit B from Bifidobacterium animalis subsp. lactis (strain AD011).